The following is a 428-amino-acid chain: Enolase (428 aa).

Q165 lines the (2R)-2-phosphoglycerate pocket. E207 acts as the Proton donor in catalysis. 3 residues coordinate Mg(2+): D244, E283, and D310. Positions 335, 364, 365, and 386 each coordinate (2R)-2-phosphoglycerate. The active-site Proton acceptor is the K335.

The protein belongs to the enolase family. It depends on Mg(2+) as a cofactor.

It is found in the cytoplasm. Its subcellular location is the secreted. The protein resides in the cell surface. It carries out the reaction (2R)-2-phosphoglycerate = phosphoenolpyruvate + H2O. The protein operates within carbohydrate degradation; glycolysis; pyruvate from D-glyceraldehyde 3-phosphate: step 4/5. Its function is as follows. Catalyzes the reversible conversion of 2-phosphoglycerate (2-PG) into phosphoenolpyruvate (PEP). It is essential for the degradation of carbohydrates via glycolysis. This Chlamydia pneumoniae (Chlamydophila pneumoniae) protein is Enolase.